The chain runs to 109 residues: Cell division protein ZapA (109 aa).

Residues 21–97 (PDQRDALNQA…QTIEQALLDQ (77 aa)) adopt a coiled-coil conformation.

This sequence belongs to the ZapA family. Type 1 subfamily. As to quaternary structure, homodimer. Interacts with FtsZ.

The protein resides in the cytoplasm. Its function is as follows. Activator of cell division through the inhibition of FtsZ GTPase activity, therefore promoting FtsZ assembly into bundles of protofilaments necessary for the formation of the division Z ring. It is recruited early at mid-cell but it is not essential for cell division. The sequence is that of Cell division protein ZapA from Salmonella agona (strain SL483).